A 210-amino-acid chain; its full sequence is Na(+)-translocating NADH-quinone reductase subunit D (210 aa).

5 helical membrane passes run 42-62, 72-92, 103-123, 131-151, and 178-198; these read FVMT…VSLI, IIVQ…VLKA, VFVS…AFAM, FIDG…VAFF, and NGLM…IWAI.

The protein belongs to the NqrDE/RnfAE family. As to quaternary structure, composed of six subunits; NqrA, NqrB, NqrC, NqrD, NqrE and NqrF.

It localises to the cell inner membrane. It carries out the reaction a ubiquinone + n Na(+)(in) + NADH + H(+) = a ubiquinol + n Na(+)(out) + NAD(+). In terms of biological role, NQR complex catalyzes the reduction of ubiquinone-1 to ubiquinol by two successive reactions, coupled with the transport of Na(+) ions from the cytoplasm to the periplasm. NqrA to NqrE are probably involved in the second step, the conversion of ubisemiquinone to ubiquinol. This Aliivibrio fischeri (strain ATCC 700601 / ES114) (Vibrio fischeri) protein is Na(+)-translocating NADH-quinone reductase subunit D.